The following is a 434-amino-acid chain: ATP-dependent protease ATPase subunit HslU (434 aa).

Residues Val-18, 60–65 (GVGKTE), Asp-247, Glu-312, and Arg-384 each bind ATP.

This sequence belongs to the ClpX chaperone family. HslU subfamily. A double ring-shaped homohexamer of HslV is capped on each side by a ring-shaped HslU homohexamer. The assembly of the HslU/HslV complex is dependent on binding of ATP.

Its subcellular location is the cytoplasm. In terms of biological role, ATPase subunit of a proteasome-like degradation complex; this subunit has chaperone activity. The binding of ATP and its subsequent hydrolysis by HslU are essential for unfolding of protein substrates subsequently hydrolyzed by HslV. HslU recognizes the N-terminal part of its protein substrates and unfolds these before they are guided to HslV for hydrolysis. In Hyphomonas neptunium (strain ATCC 15444), this protein is ATP-dependent protease ATPase subunit HslU.